A 330-amino-acid chain; its full sequence is Anthranilate phosphoribosyltransferase (330 aa).

5-phospho-alpha-D-ribose 1-diphosphate contacts are provided by residues Gly-79, 82 to 83 (GD), Thr-87, 89 to 92 (NIST), 107 to 115 (KHGNYGVSS), and Ser-119. Gly-79 contributes to the anthranilate binding site. Ser-91 contributes to the Mg(2+) binding site. Asn-110 contacts anthranilate. Position 165 (Arg-165) interacts with anthranilate. The Mg(2+) site is built by Asp-223 and Glu-224.

Belongs to the anthranilate phosphoribosyltransferase family. As to quaternary structure, homodimer. The cofactor is Mg(2+).

The catalysed reaction is N-(5-phospho-beta-D-ribosyl)anthranilate + diphosphate = 5-phospho-alpha-D-ribose 1-diphosphate + anthranilate. It participates in amino-acid biosynthesis; L-tryptophan biosynthesis; L-tryptophan from chorismate: step 2/5. Functionally, catalyzes the transfer of the phosphoribosyl group of 5-phosphorylribose-1-pyrophosphate (PRPP) to anthranilate to yield N-(5'-phosphoribosyl)-anthranilate (PRA). In Flavobacterium johnsoniae (strain ATCC 17061 / DSM 2064 / JCM 8514 / BCRC 14874 / CCUG 350202 / NBRC 14942 / NCIMB 11054 / UW101) (Cytophaga johnsonae), this protein is Anthranilate phosphoribosyltransferase.